The primary structure comprises 144 residues: Large ribosomal subunit protein uL14 (144 aa).

The protein belongs to the universal ribosomal protein uL14 family. In terms of assembly, part of the 50S ribosomal subunit. Forms a cluster with proteins L3 and L24e, part of which may contact the 16S rRNA in 2 intersubunit bridges.

In terms of biological role, binds to 23S rRNA. Forms part of two intersubunit bridges in the 70S ribosome. In Pyrobaculum aerophilum (strain ATCC 51768 / DSM 7523 / JCM 9630 / CIP 104966 / NBRC 100827 / IM2), this protein is Large ribosomal subunit protein uL14.